A 770-amino-acid chain; its full sequence is Protein PAT1 homolog 1 (770 aa).

Residues 1–26 form a disordered region; the sequence is MFRYESLEDCPLDEDEDAFQGLGEED. The segment at 1–84 is region A; interaction with DDX6/RCK; it reads MFRYESLEDC…EMDLLGDHEE (84 aa). Residues 1-397 form an involved in nuclear foci localization region; it reads MFRYESLEDC…HRSSHQDHLR (397 aa). A compositionally biased stretch (acidic residues) spans 7–26; it reads LEDCPLDEDEDAFQGLGEED. Positions 85-388 are region N; interaction with decapping machinery; sequence NLAERLSKMV…LNGAGDRGSH (304 aa). The short motif at 86 to 95 is the Nuclear export signal element; the sequence is LAERLSKMVI. Ser177 is modified (phosphoserine). Thr178 carries the phosphothreonine modification. Phosphoserine occurs at positions 179 and 184. Thr194 bears the Phosphothreonine mark. An asymmetric dimethylarginine mark is found at Arg217, Arg223, and Arg263. Residues 223 to 397 are involved in RNA-binding; the sequence is RYPAPYGERM…HRSSHQDHLR (175 aa). The residue at position 278 (Ser278) is a Phosphoserine. Arg284 carries the asymmetric dimethylarginine modification. 2 disordered regions span residues 315-344 and 360-400; these read FRAF…QNLR and QHRR…RKDP. The segment covering 324-337 has biased composition (pro residues); the sequence is SATPPPQQHPPGPG. Residues 367–380 show a composition bias toward low complexity; it reads QRQQQNRNQHRNLN. Arg385 carries the omega-N-methylarginine modification. The segment covering 385-400 has biased composition (basic and acidic residues); sequence RGSHRSSHQDHLRKDP. A region H region spans residues 389 to 448; it reads RSSHQDHLRKDPYANLMLQREKDWVSKIQMMQLQSTDPYLDDFYYQNYFEKLEKLSAAEE. Residues 398 to 770 are involved in nuclear speckle localization; the sequence is KDPYANLMLQ…TKLQLVQGIR (373 aa). The tract at residues 449 to 770 is region C; that stretch reads IQGDGPKKER…TKLQLVQGIR (322 aa).

This sequence belongs to the PAT1 family. As to quaternary structure, interacts (via region A) with DDX6/RCK. Interacts (via region H and region C) with LSM1 and LSM4. Interacts (via region N) with DCP1A, DCP2, EDC3, EDC4 and XRN1. Interacts with the CCR4-NOT complex. Interacts with the Lsm-containing SMN-Sm protein complex. Interacts with EIF4ENIF1/4E-T.

It localises to the cytoplasm. The protein resides in the P-body. Its subcellular location is the nucleus. The protein localises to the PML body. It is found in the nucleus speckle. RNA-binding protein involved in deadenylation-dependent decapping of mRNAs, leading to the degradation of mRNAs. Acts as a scaffold protein that connects deadenylation and decapping machinery. Required for cytoplasmic mRNA processing body (P-body) assembly. The polypeptide is Protein PAT1 homolog 1 (PATL1) (Pongo abelii (Sumatran orangutan)).